Here is a 201-residue protein sequence, read N- to C-terminus: FMN-dependent NADH:quinone oxidoreductase (201 aa).

FMN is bound by residues Ser-10, 16–18, 95–98, and 139–142; these read SQS, MYNF, and TTGG.

This sequence belongs to the azoreductase type 1 family. As to quaternary structure, homodimer. FMN serves as cofactor.

It carries out the reaction 2 a quinone + NADH + H(+) = 2 a 1,4-benzosemiquinone + NAD(+). It catalyses the reaction N,N-dimethyl-1,4-phenylenediamine + anthranilate + 2 NAD(+) = 2-(4-dimethylaminophenyl)diazenylbenzoate + 2 NADH + 2 H(+). In terms of biological role, quinone reductase that provides resistance to thiol-specific stress caused by electrophilic quinones. Also exhibits azoreductase activity. Catalyzes the reductive cleavage of the azo bond in aromatic azo compounds to the corresponding amines. In Tolumonas auensis (strain DSM 9187 / NBRC 110442 / TA 4), this protein is FMN-dependent NADH:quinone oxidoreductase.